The primary structure comprises 454 residues: UDP-N-acetylmuramoylalanine--D-glutamate ligase (454 aa).

Residue 114–120 (GTNGKTT) participates in ATP binding.

This sequence belongs to the MurCDEF family.

It localises to the cytoplasm. It catalyses the reaction UDP-N-acetyl-alpha-D-muramoyl-L-alanine + D-glutamate + ATP = UDP-N-acetyl-alpha-D-muramoyl-L-alanyl-D-glutamate + ADP + phosphate + H(+). Its pathway is cell wall biogenesis; peptidoglycan biosynthesis. Functionally, cell wall formation. Catalyzes the addition of glutamate to the nucleotide precursor UDP-N-acetylmuramoyl-L-alanine (UMA). This Desulfitobacterium hafniense (strain DSM 10664 / DCB-2) protein is UDP-N-acetylmuramoylalanine--D-glutamate ligase.